Here is an 86-residue protein sequence, read N- to C-terminus: Cerebrin prohormone (86 aa).

An N-terminal signal peptide occupies residues 1 to 27; sequence MFGYRSLLVLLVTLSLCLLLQSSHCSA. Residues 28 to 64 constitute a propeptide that is removed on maturation; it reads VRTYGNDLDARARREIISLAARLIKLSMYGPEDDSFV. The residue at position 83 (isoleucine 83) is an Isoleucine amide.

Expressed only in cerebral ganglion.

The protein resides in the secreted. Functionally, may function as a hormone and may play a neuromodulatory role. In Aplysia californica (California sea hare), this protein is Cerebrin prohormone (CBPH).